A 478-amino-acid polypeptide reads, in one-letter code: MTRIKINARRIFSLLIPFFFFTSVHAEQTATPAKPVTVEAKNETFAPQHPDQYLSWKATSEQSERVDALAEDPRLVILWAGYPFSRDYNKPRGHAFAVTDVRETLRTGAPKNAEDGPLPMACWSCKSPDVARLIQKDGEDGYFHGKWARGGPEIVNNLGCADCHNTASPEFAKGKPELTLSRPYAARAMEAIGKPFEKAGRFDQQSMVCGQCHVEYYFDGKNKAVKFPWDDGMKVENMEQYYDKIAFSDWTNSLSKTPMLKAQHPEYETWTAGIHGKNNVTCIDCHMPKVQNAEGKLYTDHKIGNPFDNFAQTCANCHTQDKAALQKVVAERKQSINDLKIKVEDQLVHAHFEAKAALDAGATEAEMKPIQDDIRHAQWRWDLAIASHGIHMHAPEEGLRMLGTAMDKAADARTKLARLLATKGITHEIQIPDISTKEKAQQAIGLNMEQIKAEKQDFIKTVIPQWEEQERKNGLLSQ.

Positions 1–26 (MTRIKINARRIFSLLIPFFFFTSVHA) are cleaved as a signal peptide. His-94 provides a ligand contact to heme c. Positions 122, 125, and 126 each coordinate heme. Heme c contacts are provided by Cys-160, Cys-163, His-164, Cys-209, Cys-212, and His-213. Ca(2+)-binding residues include Glu-215, Tyr-216, Lys-261, and Gln-263. Tyr-216 contributes to the substrate binding site. His-264 is a binding site for substrate. Heme c is bound by residues His-275, Cys-282, Cys-285, His-286, His-301, Cys-314, Cys-317, His-318, and His-393.

The protein belongs to the cytochrome c-552 family. Ca(2+) serves as cofactor. Requires heme c as cofactor.

It is found in the periplasm. The enzyme catalyses 6 Fe(III)-[cytochrome c] + NH4(+) + 2 H2O = 6 Fe(II)-[cytochrome c] + nitrite + 8 H(+). Its pathway is nitrogen metabolism; nitrate reduction (assimilation). Its function is as follows. Catalyzes the reduction of nitrite to ammonia, consuming six electrons in the process. In Escherichia coli O17:K52:H18 (strain UMN026 / ExPEC), this protein is Cytochrome c-552.